The sequence spans 268 residues: 4-hydroxy-tetrahydrodipicolinate reductase (268 aa).

NAD(+) contacts are provided by residues 10 to 15, E36, 99 to 101, and 123 to 126; these read GSTGRM, GTT, and APNM. The active-site Proton donor/acceptor is the H156. H157 serves as a coordination point for (S)-2,3,4,5-tetrahydrodipicolinate. K160 functions as the Proton donor in the catalytic mechanism. 166-167 contributes to the (S)-2,3,4,5-tetrahydrodipicolinate binding site; sequence GT.

This sequence belongs to the DapB family.

The protein resides in the cytoplasm. The catalysed reaction is (S)-2,3,4,5-tetrahydrodipicolinate + NAD(+) + H2O = (2S,4S)-4-hydroxy-2,3,4,5-tetrahydrodipicolinate + NADH + H(+). It carries out the reaction (S)-2,3,4,5-tetrahydrodipicolinate + NADP(+) + H2O = (2S,4S)-4-hydroxy-2,3,4,5-tetrahydrodipicolinate + NADPH + H(+). It participates in amino-acid biosynthesis; L-lysine biosynthesis via DAP pathway; (S)-tetrahydrodipicolinate from L-aspartate: step 4/4. Functionally, catalyzes the conversion of 4-hydroxy-tetrahydrodipicolinate (HTPA) to tetrahydrodipicolinate. The protein is 4-hydroxy-tetrahydrodipicolinate reductase of Nitrosomonas eutropha (strain DSM 101675 / C91 / Nm57).